The following is a 1216-amino-acid chain: DNA-directed RNA polymerase subunit beta (1216 aa).

A disordered region spans residues 1185–1216 (EEKQELPSQEYESLNLDQELKTASENVSESEF). Residues 1190–1216 (LPSQEYESLNLDQELKTASENVSESEF) show a composition bias toward polar residues.

It belongs to the RNA polymerase beta chain family. As to quaternary structure, the RNAP catalytic core consists of 2 alpha, 1 beta, 1 beta' and 1 omega subunit. When a sigma factor is associated with the core the holoenzyme is formed, which can initiate transcription.

The enzyme catalyses RNA(n) + a ribonucleoside 5'-triphosphate = RNA(n+1) + diphosphate. Its function is as follows. DNA-dependent RNA polymerase catalyzes the transcription of DNA into RNA using the four ribonucleoside triphosphates as substrates. The protein is DNA-directed RNA polymerase subunit beta of Mycoplasmopsis pulmonis (strain UAB CTIP) (Mycoplasma pulmonis).